The sequence spans 175 residues: MYPAKPAASSSQPAAEMAQPVVGIPISSPGAVAVGPVVGKWSSGLCACSDDCGLCCLTCWCPCITFGRIAEIVDRGATSCGVAGTIYTLLACFTGCHWIYSCTYRSRMRAQLGLPEACCCDCCVHFCCEPCALSQQYRELKARGFDPDLGWDVNAQKAAAAAAMYPPPAEGMMIR.

The next 2 membrane-spanning stretches (helical) occupy residues Gly53–Val73 and Cys80–Tyr100.

The protein belongs to the cornifelin family. In terms of tissue distribution, expressed in roots, coleoptiles, leaves and stalks.

It is found in the membrane. The sequence is that of Cell number regulator 9 (CNR9) from Zea mays (Maize).